The chain runs to 363 residues: Heat-inducible transcription repressor HrcA (363 aa).

The protein belongs to the HrcA family.

Its function is as follows. Negative regulator of class I heat shock genes (grpE-dnaK-dnaJ and groELS operons). Prevents heat-shock induction of these operons. The sequence is that of Heat-inducible transcription repressor HrcA from Afipia carboxidovorans (strain ATCC 49405 / DSM 1227 / KCTC 32145 / OM5) (Oligotropha carboxidovorans).